The chain runs to 264 residues: MKAVLLVVAALFLAGSQARHFWQQDDPKTSWDVVKEFANKYVDAVKESGKGYVEQLDASSLGQQLNLRLSDNWDTLSTILTKLQADFGLATQEFWDTLEKETEWLKQIVSEDLQDVKHKVQPYLENFQKKVQEEVEHYREKVRPLGIELRDGARQKLQELQEKLTPLGEDLRDRTREHVDVLRTQLAPFSEEMRQRLAKRLEELKDSATLADYHAKASEHLKMLGEKAKPALEDLRQGLLPVLENLKASILSSIDQASKQLAAQ.

An N-terminal signal peptide occupies residues 1–18 (MKAVLLVVAALFLAGSQA). Tandem repeats lie at residues 67–88 (LRLS…ADFG) and 89–110 (LATQ…QIVS). The segment at 67–264 (LRLSDNWDTL…DQASKQLAAQ (198 aa)) is 10 X approximate tandem repeats. A 3; half-length repeat occupies 111–121 (EDLQDVKHKVQ). 5 repeat units span residues 122–143 (PYLE…EKVR), 144–165 (PLGI…EKLT), 166–187 (PLGE…TQLA), 188–207 (PFSE…LKDS), and 208–229 (ATLA…EKAK). A Methionine sulfoxide modification is found at Met-193. The stretch at 230 to 240 (PALEDLRQGLL) is one 9; half-length repeat. Residues 241–264 (PVLENLKASILSSIDQASKQLAAQ) form repeat 10.

Belongs to the apolipoprotein A1/A4/E family. As to quaternary structure, homodimer. Interacts with APOA1BP and CLU. Component of a sperm activating protein complex (SPAP), consisting of APOA1, an immunoglobulin heavy chain, an immunoglobulin light chain and albumin. Interacts with NDRG1. Interacts with SCGB3A2. Interacts with NAXE and YJEFN3. Glycosylated. Post-translationally, palmitoylated. In terms of processing, phosphorylation sites are present in the extracellular medium.

Its subcellular location is the secreted. In terms of biological role, participates in the reverse transport of cholesterol from tissues to the liver for excretion by promoting cholesterol efflux from tissues and by acting as a cofactor for the lecithin cholesterol acyltransferase (LCAT). As part of the SPAP complex, activates spermatozoa motility. In Cavia porcellus (Guinea pig), this protein is Apolipoprotein A-I (APOA1).